Here is a 248-residue protein sequence, read N- to C-terminus: Probable transcriptional regulatory protein PP_1214 (248 aa).

The tract at residues 1–21 (MAGHSKWANIKHRKERQDAKR) is disordered.

Belongs to the TACO1 family.

It localises to the cytoplasm. This is Probable transcriptional regulatory protein PP_1214 from Pseudomonas putida (strain ATCC 47054 / DSM 6125 / CFBP 8728 / NCIMB 11950 / KT2440).